The following is a 569-amino-acid chain: Hexose transporter HXT8 (569 aa).

The tract at residues 1-38 (MTDRKTNLPEEPIFEEAEDDGCPSIENSSHLSVPTVEE) is disordered. At 1–61 (MTDRKTNLPE…EVVVPEKPAS (61 aa)) the chain is on the cytoplasmic side. Residues 12–21 (PIFEEAEDDG) show a composition bias toward acidic residues. A helical membrane pass occupies residues 62-82 (AYATVSIMCLCMAFGGFMSGW). The Extracellular segment spans residues 83–118 (DTGTISGFVNQTDFLRRFGNYSHSKNTYYLSNVRTG). Residues Asn-92 and Asn-102 are each glycosylated (N-linked (GlcNAc...) asparagine). Residues 119 to 139 (LIVSIFNVGSAIGCLFLSKLG) traverse the membrane as a helical segment. At 140–145 (DIYGRC) the chain is on the cytoplasmic side. A helical transmembrane segment spans residues 146–166 (MGLIIVIVVYMVGIVIQIASI). The Extracellular portion of the chain corresponds to 167 to 176 (DKWYQYFIGR). Residues 177-197 (IIAGIGAGSISVLAPMLISET) form a helical membrane-spanning segment. Residues 198 to 203 (APKHIR) are Cytoplasmic-facing. The chain crosses the membrane as a helical span at residues 204–224 (GTLLACWQLMVTFAIFLGYCT). The Extracellular segment spans residues 225 to 238 (NYGTKTYSNSVQWR). A helical transmembrane segment spans residues 239–259 (VPLGLCFAWAIIMIGGMTFVP). The Cytoplasmic portion of the chain corresponds to 260–342 (ESPRFLVQVG…INSLQQLTGD (83 aa)). A helical transmembrane segment spans residues 343 to 359 (NYFFYYGTTIFKSVGMN). The Extracellular segment spans residues 360–365 (DSFETS). The chain crosses the membrane as a helical span at residues 366 to 383 (IVLGIVNFASCFFSLYSV). Over 384 to 390 (DKLGRRR) the chain is Cytoplasmic. A helical transmembrane segment spans residues 391–411 (CLLLGAATMTACMVIYASVGV). The Extracellular segment spans residues 412 to 433 (TRLYPNGKSEPSSKGAGNCTIV). The N-linked (GlcNAc...) asparagine glycan is linked to Asn-429. A helical membrane pass occupies residues 434–454 (FTCFYIFCFSCTWGPVCYVII). Topologically, residues 455-471 (SETFPLRVRSKCMSVAT) are cytoplasmic. The chain crosses the membrane as a helical span at residues 472 to 492 (AANLLWGFLIGFFTPFITSAI). Position 493 (Asn-493) is a topological domain, extracellular. The chain crosses the membrane as a helical span at residues 494–514 (FYYGYVFMGCLAFSYFYVFFF). Residues 515–569 (VPETKGLTLEEVDEMWMDGVLPWKSESWVPASRRDGDYDNEKLQHDEKPFYKRMF) are Cytoplasmic-facing.

Belongs to the major facilitator superfamily. Sugar transporter (TC 2.A.1.1) family.

The protein localises to the membrane. Functionally, probable glucose transporter. This chain is Hexose transporter HXT8 (HXT8), found in Saccharomyces cerevisiae (strain ATCC 204508 / S288c) (Baker's yeast).